Consider the following 663-residue polypeptide: A-type ATP synthase subunit I (663 aa).

The next 7 membrane-spanning stretches (helical) occupy residues 376-396 (FFFGFMLTDFLYGLIVGIVAA), 412-432 (FAYILLWSAFFTMLLGALFGS), 468-488 (LAALAIGLAHLFLGYTLGFVI), 497-517 (GAVFEQLPWMIIIIGVALLAS), 534-554 (IALFAVGELVINGGLAALMII), 568-588 (ARLMALALATGGIAMVINVLV), and 589-609 (GMVWAIKFLYIGPIIGLIIFF).

This sequence belongs to the V-ATPase 116 kDa subunit family. As to quaternary structure, has multiple subunits with at least A(3), B(3), C, D, E, F, H, I and proteolipid K(x).

It is found in the cell membrane. Its function is as follows. Component of the A-type ATP synthase that produces ATP from ADP in the presence of a proton gradient across the membrane. The sequence is that of A-type ATP synthase subunit I from Thermococcus kodakarensis (strain ATCC BAA-918 / JCM 12380 / KOD1) (Pyrococcus kodakaraensis (strain KOD1)).